A 107-amino-acid polypeptide reads, in one-letter code: Integration host factor subunit beta (107 aa).

A disordered region spans residues Arg56–Arg107. Residues Pro82–Asp101 show a composition bias toward basic and acidic residues.

The protein belongs to the bacterial histone-like protein family. In terms of assembly, heterodimer of an alpha and a beta chain.

Functionally, this protein is one of the two subunits of integration host factor, a specific DNA-binding protein that functions in genetic recombination as well as in transcriptional and translational control. This Burkholderia vietnamiensis (strain G4 / LMG 22486) (Burkholderia cepacia (strain R1808)) protein is Integration host factor subunit beta.